Consider the following 362-residue polypeptide: Peptide chain release factor 1 (362 aa).

Residue Gln237 is modified to N5-methylglutamine. Residues 282–296 show a composition bias toward basic and acidic residues; the sequence is QQEEDKRRAEADSTR. Residues 282 to 304 are disordered; that stretch reads QQEEDKRRAEADSTRRSILSTGD.

The protein belongs to the prokaryotic/mitochondrial release factor family. In terms of processing, methylated by PrmC. Methylation increases the termination efficiency of RF1.

It is found in the cytoplasm. In terms of biological role, peptide chain release factor 1 directs the termination of translation in response to the peptide chain termination codons UAG and UAA. The polypeptide is Peptide chain release factor 1 (Tolumonas auensis (strain DSM 9187 / NBRC 110442 / TA 4)).